Reading from the N-terminus, the 367-residue chain is 2-aminoethylphosphonate--pyruvate transaminase (367 aa).

Residue K194 is modified to N6-(pyridoxal phosphate)lysine.

This sequence belongs to the class-V pyridoxal-phosphate-dependent aminotransferase family. PhnW subfamily. As to quaternary structure, homodimer. Pyridoxal 5'-phosphate serves as cofactor.

It catalyses the reaction (2-aminoethyl)phosphonate + pyruvate = phosphonoacetaldehyde + L-alanine. Functionally, involved in phosphonate degradation. The polypeptide is 2-aminoethylphosphonate--pyruvate transaminase (Salmonella paratyphi B (strain ATCC BAA-1250 / SPB7)).